The primary structure comprises 33 residues: Brevinin-2Ef (33 aa).

Residues Cys27 and Cys33 are joined by a disulfide bond.

In terms of tissue distribution, expressed by the skin glands.

Its subcellular location is the secreted. Functionally, shows antibacterial activity against representative Gram-negative and Gram-positive bacterial species, and hemolytic activity. This Pelophylax ridibundus (Marsh frog) protein is Brevinin-2Ef.